A 206-amino-acid polypeptide reads, in one-letter code: Dephospho-CoA kinase (206 aa).

The 201-residue stretch at 4-204 folds into the DPCK domain; sequence IVGLTGGIGS…HQYLQLANAQ (201 aa). 12 to 17 lines the ATP pocket; the sequence is GSGKST.

This sequence belongs to the CoaE family.

The protein resides in the cytoplasm. The enzyme catalyses 3'-dephospho-CoA + ATP = ADP + CoA + H(+). It functions in the pathway cofactor biosynthesis; coenzyme A biosynthesis; CoA from (R)-pantothenate: step 5/5. Catalyzes the phosphorylation of the 3'-hydroxyl group of dephosphocoenzyme A to form coenzyme A. This chain is Dephospho-CoA kinase, found in Pasteurella multocida (strain Pm70).